The sequence spans 201 residues: ADP-ribosylation factor-like protein 4D (201 aa).

Glycine 2 carries the N-myristoyl glycine lipid modification. Residues 28–35, 76–80, and 135–138 contribute to the GTP site; these read GLDSAGKT, DVGGQ, and NKQD.

Belongs to the small GTPase superfamily. Arf family. Interacts with CYTH2; the interaction is direct and ARL4D GTP-dependent. Does not interact with ARL4D.

The protein localises to the nucleus. It is found in the nucleolus. The protein resides in the cell membrane. Its subcellular location is the cytoplasm. In terms of biological role, small GTP-binding protein which cycles between an inactive GDP-bound and an active GTP-bound form, and the rate of cycling is regulated by guanine nucleotide exchange factors (GEF) and GTPase-activating proteins (GAP). GTP-binding protein that does not act as an allosteric activator of the cholera toxin catalytic subunit. Recruits CYTH1, CYTH2, CYTH3 and CYTH4 to the plasma membrane in GDP-bound form. The sequence is that of ADP-ribosylation factor-like protein 4D (Arl4d) from Mus musculus (Mouse).